Consider the following 516-residue polypeptide: Cytochrome P450 1A1 (516 aa).

A mitochondrial targeting signal region spans residues 25-36 (FRPQVPKGLKSP). A glycan (O-linked (GlcNAc) serine) is linked at serine 63. Phenylalanine 220 is a binding site for substrate. Heme is bound at residue cysteine 453.

Belongs to the cytochrome P450 family. Interacts with cytosolic chaperones HSP70 and HSP90; this interaction is required for initial targeting to mitochondria. Interacts (via mitochondrial targeting signal) with TOMM40 (via N-terminus); this interaction is required for translocation across the mitochondrial outer membrane. The cofactor is heme. In terms of tissue distribution, constitutively expressed in liver.

The protein resides in the endoplasmic reticulum membrane. The protein localises to the mitochondrion inner membrane. It is found in the microsome membrane. Its subcellular location is the cytoplasm. The enzyme catalyses an organic molecule + reduced [NADPH--hemoprotein reductase] + O2 = an alcohol + oxidized [NADPH--hemoprotein reductase] + H2O + H(+). It catalyses the reaction estrone + reduced [NADPH--hemoprotein reductase] + O2 = 2-hydroxyestrone + oxidized [NADPH--hemoprotein reductase] + H2O + H(+). The catalysed reaction is estrone + reduced [NADPH--hemoprotein reductase] + O2 = 4-hydroxyestrone + oxidized [NADPH--hemoprotein reductase] + H2O + H(+). It carries out the reaction estrone + reduced [NADPH--hemoprotein reductase] + O2 = 6alpha-hydroxyestrone + oxidized [NADPH--hemoprotein reductase] + H2O + H(+). The enzyme catalyses estrone + reduced [NADPH--hemoprotein reductase] + O2 = 15alpha-hydroxyestrone + oxidized [NADPH--hemoprotein reductase] + H2O + H(+). It catalyses the reaction estrone + reduced [NADPH--hemoprotein reductase] + O2 = 16alpha-hydroxyestrone + oxidized [NADPH--hemoprotein reductase] + H2O + H(+). The catalysed reaction is 17beta-estradiol + reduced [NADPH--hemoprotein reductase] + O2 = 2-hydroxy-17beta-estradiol + oxidized [NADPH--hemoprotein reductase] + H2O + H(+). It carries out the reaction 17beta-estradiol + reduced [NADPH--hemoprotein reductase] + O2 = 4-hydroxy-17beta-estradiol + oxidized [NADPH--hemoprotein reductase] + H2O + H(+). The enzyme catalyses 17beta-estradiol + reduced [NADPH--hemoprotein reductase] + O2 = 6alpha-hydroxy-17beta-estradiol + oxidized [NADPH--hemoprotein reductase] + H2O + H(+). It catalyses the reaction 17beta-estradiol + reduced [NADPH--hemoprotein reductase] + O2 = 7alpha-hydroxy-17beta-estradiol + oxidized [NADPH--hemoprotein reductase] + H2O + H(+). The catalysed reaction is 17beta-estradiol + reduced [NADPH--hemoprotein reductase] + O2 = 15alpha-hydroxy-17beta-estradiol + oxidized [NADPH--hemoprotein reductase] + H2O + H(+). It carries out the reaction (5Z,8Z,11Z)-eicosatrienoate + reduced [NADPH--hemoprotein reductase] + O2 = 19-hydroxy-(5Z,8Z,11Z)-eicosatrienoate + oxidized [NADPH--hemoprotein reductase] + H2O + H(+). The enzyme catalyses (5Z,8Z,11Z,14Z)-eicosatetraenoate + reduced [NADPH--hemoprotein reductase] + O2 = 16-hydroxy-(5Z,8Z,11Z,14Z)-eicosatetraenoate + oxidized [NADPH--hemoprotein reductase] + H2O + H(+). It catalyses the reaction (5Z,8Z,11Z,14Z)-eicosatetraenoate + reduced [NADPH--hemoprotein reductase] + O2 = 17-hydroxy-(5Z,8Z,11Z,14Z)-eicosatetraenoate + oxidized [NADPH--hemoprotein reductase] + H2O + H(+). The catalysed reaction is (5Z,8Z,11Z,14Z)-eicosatetraenoate + reduced [NADPH--hemoprotein reductase] + O2 = 18-hydroxy-(5Z,8Z,11Z,14Z)-eicosatetraenoate + oxidized [NADPH--hemoprotein reductase] + H2O + H(+). It carries out the reaction (5Z,8Z,11Z,14Z)-eicosatetraenoate + reduced [NADPH--hemoprotein reductase] + O2 = 19-hydroxy-(5Z,8Z,11Z,14Z)-eicosatetraenoate + oxidized [NADPH--hemoprotein reductase] + H2O + H(+). The enzyme catalyses (5Z,8Z,11Z,14Z,17Z)-eicosapentaenoate + reduced [NADPH--hemoprotein reductase] + O2 = 19-hydroxy-(5Z,8Z,11Z,14Z,17Z)-eicosapentaenoate + oxidized [NADPH--hemoprotein reductase] + H2O + H(+). It catalyses the reaction (5Z,8Z,11Z,14Z)-eicosatetraenoate + reduced [NADPH--hemoprotein reductase] + O2 = (8R,9S)-epoxy-(5Z,11Z,14Z)-eicosatrienoate + oxidized [NADPH--hemoprotein reductase] + H2O + H(+). The catalysed reaction is (5Z,8Z,11Z,14Z)-eicosatetraenoate + reduced [NADPH--hemoprotein reductase] + O2 = (11R,12S)-epoxy-(5Z,8Z,14Z)-eicosatrienoate + oxidized [NADPH--hemoprotein reductase] + H2O + H(+). It carries out the reaction (5Z,8Z,11Z,14Z)-eicosatetraenoate + reduced [NADPH--hemoprotein reductase] + O2 = (14S,15R)-epoxy-(5Z,8Z,11Z)-eicosatrienoate + oxidized [NADPH--hemoprotein reductase] + H2O + H(+). The enzyme catalyses (5Z,8Z,11Z,14Z)-eicosatetraenoate + reduced [NADPH--hemoprotein reductase] + O2 = (14R,15S)-epoxy-(5Z,8Z,11Z)-eicosatrienoate + oxidized [NADPH--hemoprotein reductase] + H2O + H(+). It catalyses the reaction (5Z,8Z,11Z,14Z,17Z)-eicosapentaenoate + reduced [NADPH--hemoprotein reductase] + O2 = (17R,18S)-epoxy-(5Z,8Z,11Z,14Z)-eicosatetraenoate + oxidized [NADPH--hemoprotein reductase] + H2O + H(+). The catalysed reaction is (4Z,7Z,10Z,13Z,16Z,19Z)-docosahexaenoate + reduced [NADPH--hemoprotein reductase] + O2 = (19S,20R)-epoxy-(4Z,7Z,10Z,13Z,16Z)-docosapentaenoate + oxidized [NADPH--hemoprotein reductase] + H2O + H(+). It carries out the reaction (4Z,7Z,10Z,13Z,16Z,19Z)-docosahexaenoate + reduced [NADPH--hemoprotein reductase] + O2 = (19R,20S)-epoxy-(4Z,7Z,10Z,13Z,16Z)-docosapentaenoate + oxidized [NADPH--hemoprotein reductase] + H2O + H(+). The enzyme catalyses all-trans-retinol + reduced [NADPH--hemoprotein reductase] + O2 = all-trans-retinal + oxidized [NADPH--hemoprotein reductase] + 2 H2O + H(+). It catalyses the reaction all-trans-retinal + reduced [NADPH--hemoprotein reductase] + O2 = all-trans-retinoate + oxidized [NADPH--hemoprotein reductase] + H2O + 2 H(+). The catalysed reaction is (13S)-hydroperoxy-(9Z,11E)-octadecadienoate = 13-oxo-(9Z,11E)-octadecadienoate + H2O. It carries out the reaction (12S)-hydroperoxy-(5Z,8Z,10E,14Z)-eicosatetraenoate = 12-oxo-(5Z,8Z,10E,14Z)-eicosatetraenoate + H2O. The enzyme catalyses (15S)-hydroperoxy-(5Z,8Z,11Z,13E)-eicosatetraenoate = 15-oxo-(5Z,8Z,11Z,13E)-eicosatetraenoate + H2O. It catalyses the reaction (5S)-hydroperoxy-(6E,8Z,11Z,14Z)-eicosatetraenoate = 5-oxo-(6E,8Z,11Z,14Z)-eicosatetraenoate + H2O. The protein operates within steroid hormone biosynthesis. It functions in the pathway lipid metabolism; fatty acid metabolism. It participates in cofactor metabolism; retinol metabolism. Functionally, a cytochrome P450 monooxygenase involved in the metabolism of various endogenous substrates, including fatty acids, steroid hormones and vitamins. Mechanistically, uses molecular oxygen inserting one oxygen atom into a substrate, and reducing the second into a water molecule, with two electrons provided by NADPH via cytochrome P450 reductase (CPR; NADPH-ferrihemoprotein reductase). Catalyzes the hydroxylation of carbon-hydrogen bonds. Exhibits high catalytic activity for the formation of hydroxyestrogens from estrone (E1) and 17beta-estradiol (E2), namely 2-hydroxy E1 and E2, as well as D-ring hydroxylated E1 and E2 at the C15alpha and C16alpha positions. Displays different regioselectivities for polyunsaturated fatty acids (PUFA) hydroxylation. Catalyzes the epoxidation of double bonds of certain PUFA. Converts arachidonic acid toward epoxyeicosatrienoic acid (EET) regioisomers, 8,9-, 11,12-, and 14,15-EET, that function as lipid mediators in the vascular system. Displays an absolute stereoselectivity in the epoxidation of eicosapentaenoic acid (EPA) producing the 17(R),18(S) enantiomer. May play an important role in all-trans retinoic acid biosynthesis in extrahepatic tissues. Catalyzes two successive oxidative transformation of all-trans retinol to all-trans retinal and then to the active form all-trans retinoic acid. May also participate in eicosanoids metabolism by converting hydroperoxide species into oxo metabolites (lipoxygenase-like reaction, NADPH-independent). The polypeptide is Cytochrome P450 1A1 (CYP1A1) (Cavia porcellus (Guinea pig)).